The following is a 208-amino-acid chain: Large ribosomal subunit protein uL4 (208 aa).

The segment at 58–77 (RGGGRKPWRQKGTGRARQGS) is disordered. The segment covering 60-71 (GGRKPWRQKGTG) has biased composition (basic residues).

It belongs to the universal ribosomal protein uL4 family. Part of the 50S ribosomal subunit.

Its function is as follows. One of the primary rRNA binding proteins, this protein initially binds near the 5'-end of the 23S rRNA. It is important during the early stages of 50S assembly. It makes multiple contacts with different domains of the 23S rRNA in the assembled 50S subunit and ribosome. Functionally, forms part of the polypeptide exit tunnel. This Caldicellulosiruptor saccharolyticus (strain ATCC 43494 / DSM 8903 / Tp8T 6331) protein is Large ribosomal subunit protein uL4.